The following is a 128-amino-acid chain: Small ribosomal subunit protein uS11m (128 aa).

The protein belongs to the universal ribosomal protein uS11 family.

It is found in the mitochondrion. The chain is Small ribosomal subunit protein uS11m (RPS11) from Prototheca wickerhamii.